We begin with the raw amino-acid sequence, 279 residues long: MTERFDCHHCEDSLFGRKYVLREEQPYCVACFEALFASTCEECGKLIGCDCKDLSYKDRHWHEACFHCSRCRGSLVDKPFAAKEDQLLCTDCYSQEYSSRCQECKKSIMPGTRKMEYKGSSWHETCFICHRCQQPIGTKSFIPKDSENFCVPCYERQYALQCVQCKKPITTGGVTYREQPWHRECFVCTACKKPLSGQRFTSRDEFAYCLGCFCDLYAKKCAGCANPISGLGGTKYISFEERQWHNDCFNCKKCSLSLVGRGFLTERDDILCPDCGKDI.

Residues 7–31 (CHHCEDSLFGRKYVLREEQPYCVAC) form a C4-type zinc finger. 3 LIM zinc-binding domains span residues 40 to 92 (CEEC…CTDC), 101 to 153 (CQEC…CVPC), and 162 to 212 (CVQC…CLGC). A Glycyl lysine isopeptide (Lys-Gly) (interchain with G-Cter in SUMO2) cross-link involves residue K78. Residues K167 and K220 each participate in a glycyl lysine isopeptide (Lys-Gly) (interchain with G-Cter in SUMO2) cross-link. The region spanning 221-275 (CAGCANPISGLGGTKYISFEERQWHNDCFNCKKCSLSLVGRGFLTERDDILCPDC) is the LIM zinc-binding 4 domain. S238 is modified (phosphoserine).

As to quaternary structure, interacts with ZNF638 and TTN/titin. Interacts with E4F1. Interacts with GRB7. Interacts with SIRT1 and FOXO1. Interacts with CEFIP and calcineurin. Interacts with FOXK1.

The protein resides in the cytoplasm. It localises to the nucleus. Its subcellular location is the myofibril. The protein localises to the sarcomere. It is found in the z line. In terms of biological role, may function as a molecular transmitter linking various signaling pathways to transcriptional regulation. Negatively regulates the transcriptional repressor E4F1 and may function in cell growth. Inhibits the transcriptional activity of FOXO1 and its apoptotic function by enhancing the interaction of FOXO1 with SIRT1 and FOXO1 deacetylation. Negatively regulates the calcineurin/NFAT signaling pathway in cardiomyocytes. The polypeptide is Four and a half LIM domains protein 2 (FHL2) (Bos taurus (Bovine)).